Reading from the N-terminus, the 119-residue chain is uncharacterized protein (119 aa).

This is an uncharacterized protein from Lactococcus lactis subsp. lactis (strain IL1403) (Streptococcus lactis).